Reading from the N-terminus, the 431-residue chain is Mevalonate kinase (431 aa).

ATP-binding positions include K13, S139, and 144-150 (GAGLGSS). The Mg(2+) site is built by S150 and E198. D209 acts as the Proton acceptor in catalysis.

This sequence belongs to the GHMP kinase family. Mevalonate kinase subfamily. As to quaternary structure, homodimer.

Its subcellular location is the cytoplasm. It localises to the cytosol. The catalysed reaction is (R)-mevalonate + ATP = (R)-5-phosphomevalonate + ADP + H(+). Its pathway is isoprenoid biosynthesis; isopentenyl diphosphate biosynthesis via mevalonate pathway; isopentenyl diphosphate from (R)-mevalonate: step 1/3. Functionally, mevalonate kinase; part of the second module of ergosterol biosynthesis pathway that includes the middle steps of the pathway. ERG12 converts mevalonate into 5-phosphomevalonate. The second module is carried out in the vacuole and involves the formation of farnesyl diphosphate, which is also an important intermediate in the biosynthesis of ubiquinone, dolichol, heme and prenylated proteins. Activity by the mevalonate kinase ERG12 first converts mevalonate into 5-phosphomevalonate. 5-phosphomevalonate is then further converted to 5-diphosphomevalonate by the phosphomevalonate kinase ERG8. The diphosphomevalonate decarboxylase MVD then produces isopentenyl diphosphate. The isopentenyl-diphosphate delta-isomerase IDI1 then catalyzes the 1,3-allylic rearrangement of the homoallylic substrate isopentenyl (IPP) to its highly electrophilic allylic isomer, dimethylallyl diphosphate (DMAPP). Finally the farnesyl diphosphate synthase ERG20 catalyzes the sequential condensation of isopentenyl pyrophosphate with dimethylallyl pyrophosphate, and then with the resultant geranylpyrophosphate to the ultimate product farnesyl pyrophosphate. This Candida albicans (strain SC5314 / ATCC MYA-2876) (Yeast) protein is Mevalonate kinase.